Here is a 548-residue protein sequence, read N- to C-terminus: Membrane protein insertase YidC (548 aa).

A helical transmembrane segment spans residues 6–26 (NLLVIALLFVSFMIWQAWEQD). Positions 28–56 (NPQPQTQQTTQTTTTAAGSAADQGVPASG) are disordered. Low complexity predominate over residues 29-42 (PQPQTQQTTQTTTT). 4 consecutive transmembrane segments (helical) span residues 350–370 (FVGN…GIMY), 424–444 (FPLI…MGSI), 458–478 (LSAQ…MFFI), and 499–519 (PVIF…YYIV).

This sequence belongs to the OXA1/ALB3/YidC family. Type 1 subfamily. In terms of assembly, interacts with the Sec translocase complex via SecD. Specifically interacts with transmembrane segments of nascent integral membrane proteins during membrane integration.

The protein localises to the cell inner membrane. Its function is as follows. Required for the insertion and/or proper folding and/or complex formation of integral membrane proteins into the membrane. Involved in integration of membrane proteins that insert both dependently and independently of the Sec translocase complex, as well as at least some lipoproteins. Aids folding of multispanning membrane proteins. In Salmonella agona (strain SL483), this protein is Membrane protein insertase YidC.